Consider the following 100-residue polypeptide: Large ribosomal subunit protein uL23 (100 aa).

This sequence belongs to the universal ribosomal protein uL23 family. Part of the 50S ribosomal subunit. Contacts protein L29, and trigger factor when it is bound to the ribosome.

One of the early assembly proteins it binds 23S rRNA. One of the proteins that surrounds the polypeptide exit tunnel on the outside of the ribosome. Forms the main docking site for trigger factor binding to the ribosome. The polypeptide is Large ribosomal subunit protein uL23 (Dechloromonas aromatica (strain RCB)).